The chain runs to 350 residues: UDP-N-acetylenolpyruvoylglucosamine reductase (350 aa).

An FAD-binding PCMH-type domain is found at 24-195 (HVEATARWLL…VAVEFNLPLL (172 aa)). Residue Arg172 is part of the active site. Ser245 (proton donor) is an active-site residue. Glu342 is a catalytic residue.

The protein belongs to the MurB family. Requires FAD as cofactor.

The protein resides in the cytoplasm. It carries out the reaction UDP-N-acetyl-alpha-D-muramate + NADP(+) = UDP-N-acetyl-3-O-(1-carboxyvinyl)-alpha-D-glucosamine + NADPH + H(+). It participates in cell wall biogenesis; peptidoglycan biosynthesis. Cell wall formation. This is UDP-N-acetylenolpyruvoylglucosamine reductase from Xanthomonas euvesicatoria pv. vesicatoria (strain 85-10) (Xanthomonas campestris pv. vesicatoria).